A 127-amino-acid chain; its full sequence is Flagellar hook-basal body complex protein FliE (127 aa).

The protein belongs to the FliE family.

Its subcellular location is the bacterial flagellum basal body. The sequence is that of Flagellar hook-basal body complex protein FliE from Leptospira interrogans serogroup Icterohaemorrhagiae serovar copenhageni (strain Fiocruz L1-130).